The chain runs to 346 residues: Biotin synthase (346 aa).

Positions 38–256 constitute a Radical SAM core domain; the sequence is RQVQVSTLLS…IAVARIMMPT (219 aa). 3 residues coordinate [4Fe-4S] cluster: C53, C57, and C60. [2Fe-2S] cluster-binding residues include C97, C128, C188, and R260.

This sequence belongs to the radical SAM superfamily. Biotin synthase family. In terms of assembly, homodimer. It depends on [4Fe-4S] cluster as a cofactor. [2Fe-2S] cluster is required as a cofactor.

It catalyses the reaction (4R,5S)-dethiobiotin + (sulfur carrier)-SH + 2 reduced [2Fe-2S]-[ferredoxin] + 2 S-adenosyl-L-methionine = (sulfur carrier)-H + biotin + 2 5'-deoxyadenosine + 2 L-methionine + 2 oxidized [2Fe-2S]-[ferredoxin]. Its pathway is cofactor biosynthesis; biotin biosynthesis; biotin from 7,8-diaminononanoate: step 2/2. In terms of biological role, catalyzes the conversion of dethiobiotin (DTB) to biotin by the insertion of a sulfur atom into dethiobiotin via a radical-based mechanism. The sequence is that of Biotin synthase from Pseudescherichia vulneris (Escherichia vulneris).